A 744-amino-acid polypeptide reads, in one-letter code: Photosystem I P700 chlorophyll a apoprotein A2 (744 aa).

The next 8 membrane-spanning stretches (helical) occupy residues 48–71 (LFAT…FHIA), 137–160 (LYAG…LHLQ), 177–201 (LNHH…HVAI), 275–293 (MAHH…GHMY), 337–360 (LHFQ…QHMY), 376–402 (AALY…IFLV), 424–446 (AIIS…LYVH), and 527–545 (FLVH…LILV). Residues C569 and C578 each coordinate [4Fe-4S] cluster. 2 consecutive transmembrane segments (helical) span residues 585–606 (AFYL…YWHW) and 653–675 (LAVW…MFLI). Chlorophyll a contacts are provided by H664, M672, and Y680. W681 lines the phylloquinone pocket. A helical membrane pass occupies residues 717 to 737 (LVGLAHFTVGYVLTYAAFVIA).

It belongs to the PsaA/PsaB family. The PsaA/B heterodimer binds the P700 chlorophyll special pair and subsequent electron acceptors. PSI consists of a core antenna complex that captures photons, and an electron transfer chain that converts photonic excitation into a charge separation. The cyanobacterial PSI reaction center is composed of one copy each of PsaA,B,C,D,E,F,I,J,K,L,M and X, and forms trimeric complexes. PSI electron transfer chain: 5 chlorophyll a, 1 chlorophyll a', 2 phylloquinones and 3 4Fe-4S clusters. PSI core antenna: 90 chlorophyll a, 22 carotenoids, 3 phospholipids and 1 galactolipid. P700 is a chlorophyll a/chlorophyll a' dimer, A0 is one or more chlorophyll a, A1 is one or both phylloquinones and FX is a shared 4Fe-4S iron-sulfur center. serves as cofactor.

The protein localises to the cellular thylakoid membrane. It carries out the reaction reduced [plastocyanin] + hnu + oxidized [2Fe-2S]-[ferredoxin] = oxidized [plastocyanin] + reduced [2Fe-2S]-[ferredoxin]. PsaA and PsaB bind P700, the primary electron donor of photosystem I (PSI), as well as the electron acceptors A0, A1 and FX. PSI is a plastocyanin/cytochrome c6-ferredoxin oxidoreductase, converting photonic excitation into a charge separation, which transfers an electron from the donor P700 chlorophyll pair to the spectroscopically characterized acceptors A0, A1, FX, FA and FB in turn. Oxidized P700 is reduced on the lumenal side of the thylakoid membrane by plastocyanin or cytochrome c6. In Synechococcus sp. (strain JA-2-3B'a(2-13)) (Cyanobacteria bacterium Yellowstone B-Prime), this protein is Photosystem I P700 chlorophyll a apoprotein A2.